The chain runs to 95 residues: Small ribosomal subunit protein uS19 (95 aa).

The disordered stretch occupies residues 76 to 95 (PTRRFGGHADKKAKKGELKK). A compositionally biased stretch (basic and acidic residues) spans 82–95 (GHADKKAKKGELKK).

It belongs to the universal ribosomal protein uS19 family.

Protein S19 forms a complex with S13 that binds strongly to the 16S ribosomal RNA. The chain is Small ribosomal subunit protein uS19 from Thermotoga neapolitana (strain ATCC 49049 / DSM 4359 / NBRC 107923 / NS-E).